A 176-amino-acid polypeptide reads, in one-letter code: Large ribosomal subunit protein uL16 (176 aa).

It belongs to the universal ribosomal protein uL16 family.

The polypeptide is Large ribosomal subunit protein uL16 (Picrophilus torridus (strain ATCC 700027 / DSM 9790 / JCM 10055 / NBRC 100828 / KAW 2/3)).